Consider the following 433-residue polypeptide: Glutamate-1-semialdehyde 2,1-aminomutase (433 aa).

K265 bears the N6-(pyridoxal phosphate)lysine mark.

The protein belongs to the class-III pyridoxal-phosphate-dependent aminotransferase family. HemL subfamily. Homodimer. The cofactor is pyridoxal 5'-phosphate.

It is found in the cytoplasm. The catalysed reaction is (S)-4-amino-5-oxopentanoate = 5-aminolevulinate. It participates in porphyrin-containing compound metabolism; protoporphyrin-IX biosynthesis; 5-aminolevulinate from L-glutamyl-tRNA(Glu): step 2/2. The polypeptide is Glutamate-1-semialdehyde 2,1-aminomutase (Shewanella denitrificans (strain OS217 / ATCC BAA-1090 / DSM 15013)).